Here is a 510-residue protein sequence, read N- to C-terminus: Cytochrome P450 90D2 (510 aa).

The chain crosses the membrane as a helical span at residues 6 to 26; that stretch reads MVGSGGVYSWPAALLVAAIVV. Position 444 (cysteine 444) interacts with heme.

This sequence belongs to the cytochrome P450 family. Heme is required as a cofactor.

It localises to the membrane. It carries out the reaction 3-epi-6-deoxocathasterone + reduced [NADPH--hemoprotein reductase] + O2 = 6-deoxotyphasterol + oxidized [NADPH--hemoprotein reductase] + H2O + H(+). The catalysed reaction is (22S,24R)-22-hydroxy-5alpha-ergostan-3-one + reduced [NADPH--hemoprotein reductase] + O2 = 3-dehydro-6-deoxoteasterone + oxidized [NADPH--hemoprotein reductase] + H2O + H(+). The enzyme catalyses 6-deoxycathasterone + reduced [NADPH--hemoprotein reductase] + O2 = 6-deoxoteasterone + oxidized [NADPH--hemoprotein reductase] + H2O + H(+). The protein operates within plant hormone biosynthesis; brassinosteroid biosynthesis. Involved in reduction steps of the biosynthesis of plant campesterol-derivative steroids, ending to castasterone (CS) but missing brassinolide (BL). Catalyzes the conversion of (22S,24R)-22-hydroxy-5alpha-ergostan-3-one (22-hydroxy-campesta-3-one, 22-OH-3-one) to 3-dehydro-6-deoxoteasterone (6-deoxo3DT, 6-deoxo-3-DHT), 3-epi-6-deoxocathasterone (3-epi-6-deoxoCT) to 6-deoxotyphasterol (6-deoxoTY) and of 6-deoxocathasterone (6-deoxoCT) to 6-deoxoteasterone (6-deoxoTE). The sequence is that of Cytochrome P450 90D2 from Brachypodium distachyon (Purple false brome).